A 993-amino-acid chain; its full sequence is Ephrin type-B receptor 3 (993 aa).

Residues 1–29 form the signal peptide; that stretch reads MAGARPPPGLLPLLAPLLLPLLLPAGCWA. The Extracellular portion of the chain corresponds to 30–554; that stretch reads LEETLMDTKW…AQQLQEQLPL (525 aa). The Eph LBD domain maps to 31-209; it reads EETLMDTKWV…FYKKCASTTA (179 aa). A disulfide bridge links C73 with C191. Fibronectin type-III domains are found at residues 331–446 and 447–540; these read VPSP…TNQA and APSE…TTSE. Residues N343 and N440 are each glycosylated (N-linked (GlcNAc...) asparagine). Residues 555-575 traverse the membrane as a helical segment; it reads IVGSTVAGFVFMVVVVVIALV. The Cytoplasmic portion of the chain corresponds to 576 to 993; that stretch reads CLRKQRHGPD…QMNQTLPVQV (418 aa). Y609 carries the post-translational modification Phosphotyrosine; by autocatalysis. A Protein kinase domain is found at 628–891; that stretch reads VKIEEVIGAG…QIVNTLDKLI (264 aa). ATP is bound by residues 634-642 and K660; that span reads IGAGEFGEV. Catalysis depends on D753, which acts as the Proton acceptor. The 65-residue stretch at 920–984 folds into the SAM domain; sequence TTFTTVGDWL…LCSIQDMRLQ (65 aa). Residues 991–993 carry the PDZ-binding motif; the sequence is VQV.

The protein belongs to the protein kinase superfamily. Tyr protein kinase family. Ephrin receptor subfamily. In terms of assembly, heterotetramer upon binding of the ligand. The heterotetramer is composed of an ephrin dimer and a receptor dimer. Oligomerization is probably required to induce biological responses. Phosphorylated. Autophosphorylates upon ligand-binding. Autophosphorylation on Tyr-609 is required for interaction with SH2 domain-containing proteins. In terms of processing, ubiquitinated by RNF186, mainly through 'Lys-48' and 'Lys-63'-linked polyubiquitin chains. Expressed in cells of the retinal ganglion cell layer during retinal axon guidance to the optic disk. Expressed by Paneth and progenitor cells in the crypts of the intestinal epithelium (at protein level). Expressed in myogenic progenitor cells.

It localises to the cell membrane. The protein resides in the cell projection. Its subcellular location is the dendrite. The catalysed reaction is L-tyrosyl-[protein] + ATP = O-phospho-L-tyrosyl-[protein] + ADP + H(+). Its function is as follows. Receptor tyrosine kinase which binds promiscuously transmembrane ephrin-B family ligands residing on adjacent cells, leading to contact-dependent bidirectional signaling into neighboring cells. The signaling pathway downstream of the receptor is referred to as forward signaling while the signaling pathway downstream of the ephrin ligand is referred to as reverse signaling. Generally has an overlapping and redundant function with EPHB2. Like EPHB2, functions in axon guidance during development regulating for instance the neurons forming the corpus callosum and the anterior commissure, 2 major interhemispheric connections between the temporal lobes of the cerebral cortex. In addition to its role in axon guidance also plays an important redundant role with other ephrin-B receptors in development and maturation of dendritic spines and the formation of excitatory synapses. Controls other aspects of development through regulation of cell migration and positioning. This includes angiogenesis, palate development and thymic epithelium development for instance. Forward and reverse signaling through the EFNB2/EPHB3 complex also regulate migration and adhesion of cells that tubularize the urethra and septate the cloaca. Finally, plays an important role in intestinal epithelium differentiation segregating progenitor from differentiated cells in the crypt. In Mus musculus (Mouse), this protein is Ephrin type-B receptor 3 (Ephb3).